The chain runs to 131 residues: Calvin cycle protein CP12-2, chloroplastic (131 aa).

Residues 1 to 53 (MATIATGLNIATQRVFVTSENRPVCLAGPVHLNNSWNLGSRTTNRMMKLQPIK) constitute a chloroplast transit peptide. 2 cysteine pairs are disulfide-bonded: cysteine 75–cysteine 84 and cysteine 117–cysteine 126. Positions 97 to 131 (AASHARDKKKADGSDPLEEYCKDNPETNECRTYDN) are disordered. Positions 105-131 (KKADGSDPLEEYCKDNPETNECRTYDN) are enriched in basic and acidic residues.

It belongs to the CP12 family. As to quaternary structure, monomer. Component of a complex that contains two dimers of PRK, two tetramers of GAPDH and CP12. CP12 associates with GAPDH, causing its conformation to change. This GAPDH/CP12 complex binds PRK to form a half-complex (one unit). This unit probably dimerizes due partially to interactions between the enzymes of each unit. Post-translationally, contains two disulfide bonds; only the oxidized protein, with two disulfide bonds, is active in complex formation. The C-terminal disulfide is involved in the interaction with GAPDH and the N-terminal disulfide mediates the binding of PRK with this binary complex. As to expression, mostly expressed in cotyledons, leaves and flower stalks, and, to a lower extent, in flowers and stems. Barely detectable in roots and siliques.

The protein resides in the plastid. Its subcellular location is the chloroplast. Acts as a linker essential in the assembly of a core complex of PRK/GAPDH. Coordinates the reversible inactivation of chloroplast enzymes GAPDH and PRK during darkness in photosynthetic tissues. The chain is Calvin cycle protein CP12-2, chloroplastic (CP12-2) from Arabidopsis thaliana (Mouse-ear cress).